Here is a 235-residue protein sequence, read N- to C-terminus: Transcriptional regulatory protein MalR (235 aa).

Positions 3–119 (NVLIVEDDPM…RFQTALSDYR (117 aa)) constitute a Response regulatory domain. D54 bears the 4-aspartylphosphate mark. Positions 178–197 (TEDLAKHTEISQVSIRKYLK) form a DNA-binding region, H-T-H motif.

Phosphorylated and activated by MalK.

The protein localises to the cytoplasm. Functionally, member of a two-component regulatory system MalK/MalR. Activates transcription of maeA, maeN and yflS in presence of malate by binding to their promoter region. The chain is Transcriptional regulatory protein MalR (malR) from Bacillus subtilis (strain 168).